Reading from the N-terminus, the 95-residue chain is uncharacterized protein (95 aa).

The first 22 residues, 1-22 (MLPGFTMIITSLLLTFFREVEH), serve as a signal peptide directing secretion. The Extracellular portion of the chain corresponds to 23–52 (LLPECLTITNTPQRTLVLIQRFTLLQKVMT). Residues 53–69 (IHLLLSIGTLGSLFTLH) traverse the membrane as a helical segment. Residues 70–95 (PQLLKTNLLQKLHKELNSNLDYLISC) are Cytoplasmic-facing.

Its subcellular location is the host membrane. This is an uncharacterized protein from Acidianus bottle-shaped virus (isolate Italy/Pozzuoli) (ABV).